The following is a 496-amino-acid chain: UDP-N-acetylmuramoylalanine--D-glutamate ligase (496 aa).

Residue 130-136 (GTNGKTT) participates in ATP binding.

Belongs to the MurCDEF family.

Its subcellular location is the cytoplasm. It catalyses the reaction UDP-N-acetyl-alpha-D-muramoyl-L-alanine + D-glutamate + ATP = UDP-N-acetyl-alpha-D-muramoyl-L-alanyl-D-glutamate + ADP + phosphate + H(+). It functions in the pathway cell wall biogenesis; peptidoglycan biosynthesis. Its function is as follows. Cell wall formation. Catalyzes the addition of glutamate to the nucleotide precursor UDP-N-acetylmuramoyl-L-alanine (UMA). This is UDP-N-acetylmuramoylalanine--D-glutamate ligase (murD) from Mycobacterium tuberculosis (strain CDC 1551 / Oshkosh).